Here is an 88-residue protein sequence, read N- to C-terminus: DNA-directed RNA polymerase subunit omega (88 aa).

It belongs to the RNA polymerase subunit omega family. As to quaternary structure, the RNAP catalytic core consists of 2 alpha, 1 beta, 1 beta' and 1 omega subunit. When a sigma factor is associated with the core the holoenzyme is formed, which can initiate transcription.

It carries out the reaction RNA(n) + a ribonucleoside 5'-triphosphate = RNA(n+1) + diphosphate. Its function is as follows. Promotes RNA polymerase assembly. Latches the N- and C-terminal regions of the beta' subunit thereby facilitating its interaction with the beta and alpha subunits. In Thermobifida fusca (strain YX), this protein is DNA-directed RNA polymerase subunit omega.